The following is a 1704-amino-acid chain: Villidin (1704 aa).

WD repeat units follow at residues 82–122, 133–173, 180–221, and 225–271; these read GHTD…LIKD, KQQK…EQSS, GHED…TPIQ, and THEG…SSQP. Disordered stretches follow at residues 439 to 460 and 606 to 721; these read IGNS…DSPF and SVPS…NSST. Residues 442 to 456 show a composition bias toward gly residues; it reads SGSGGGGGDGDGNGG. Residues 459–563 form the PH 1 domain; the sequence is PFITEGIVKQ…WCQSINAYRE (105 aa). Low complexity-rich tracts occupy residues 613–636, 651–701, and 709–721; these read QQQQ…TPTQ, SLKS…SSSS, and NNST…NSST. PH domains lie at 727 to 828 and 871 to 969; these read DIVI…QNLK and EQPL…AARK. The interval 848–877 is disordered; it reads LISSPMSDDESNTNEGGVEEEEEEQPLEGQ. Over residues 854–873 the composition is skewed to acidic residues; it reads SDDESNTNEGGVEEEEEEQP. 5 Gelsolin-like repeats span residues 1025 to 1119, 1138 to 1241, 1293 to 1390, 1404 to 1494, and 1520 to 1615; these read KQKI…LGGN, IKTT…FANY, GRVK…FKTK, KKPS…FEST, and RFFV…FRAW. The 64-residue stretch at 1641 to 1704 folds into the HP domain; the sequence is DYLKEIYTYE…EGIKKELFLF (64 aa).

It localises to the membrane. The protein resides in the cytoplasm. Its subcellular location is the cytoskeleton. May function as a linker between membranes and the actin cytoskeleton. This chain is Villidin (vilA), found in Dictyostelium discoideum (Social amoeba).